The chain runs to 213 residues: Dimethylamine corrinoid protein (213 aa).

The B12-binding N-terminal domain maps to 1 to 90 (MSKEELLQEL…LMPEGASGSK (90 aa)). In terms of domain architecture, B12-binding spans 91-213 (LGVIVNGTVE…AVAKAKELLA (123 aa)). His-104 is a binding site for methylcob(III)alamin.

It belongs to the methylamine corrinoid protein family. As to quaternary structure, copurifies with MtbA.

The protein operates within one-carbon metabolism; methanogenesis from dimethylamine. In terms of biological role, acts as a methyl group carrier between MtbB1 and MtbA. Binds 1 corrinoid cofactor per protein, is subsequently demethylated by MtbA. The protein is Dimethylamine corrinoid protein of Methanosarcina barkeri.